The following is a 1318-amino-acid chain: Major viral transcription factor ICP4 homolog (1318 aa).

Positions 1–11 (MSAEQRKKKKT) are enriched in basic residues. 6 disordered regions span residues 1 to 108 (MSAE…ADGV), 123 to 324 (EAVR…RLER), 542 to 580 (LTGARTPDDGGDANRHDGDDARGKPAAAAAPLPSAAASP), 606 to 630 (PASAPAGADDDDDDDGAGGGGGGRR), 780 to 873 (LAAP…TPAP), and 1291 to 1318 (AGLATPPRREPVDMDAELEDDDDGLFGE). Over residues 44 to 56 (SPDPADGPPPTPN) the composition is skewed to pro residues. The span at 74 to 91 (EENEDEADDAAADADADE) shows a compositional bias: acidic residues. A compositionally biased stretch (basic and acidic residues) spans 133-143 (PERDGAQEEAA). The segment covering 159-174 (GEENDDDDDDDDDDDR) has biased composition (acidic residues). Residues 206–226 (APRRHHHHHHHRRRRAPRRRS) show a composition bias toward basic residues. Low complexity-rich tracts occupy residues 228–257 (ASDSSKSGSSSSASSASSSASSSSSASASS) and 268–278 (RAPASAADHAA). Residues 299 to 308 (APRPSPPRAE) are compositionally biased toward pro residues. Residues 309–320 (PAPARTPAATAG) are compositionally biased toward low complexity. A DNA-binding region spans residues 319–547 (AGRLERRRAR…ENAALTGART (229 aa)). Positions 547-564 (TPDDGGDANRHDGDDARG) are enriched in basic and acidic residues. The span at 566–580 (PAAAAAPLPSAAASP) shows a compositional bias: low complexity. Composition is skewed to pro residues over residues 799-808 (ARAPPGGAPR) and 821-843 (AAAPPAGAAPPAPPTPPPRPPRP). Low complexity predominate over residues 844–863 (AALTRRPAEGPDPQGGWRRQ). The segment covering 1303–1318 (DMDAELEDDDDGLFGE) has biased composition (acidic residues).

Belongs to the herpesviridae ICP4 family. Homodimer. Interacts with transcriptional regulator ICP27; this interaction is required for proper incorporation of ICP4 into virions. Interacts with host TBP; theis interaction helps the stabilization of the pre-initiation complex on specific promoters. Interacts with host GTF2B. In terms of processing, ADP-ribosylated. The long stretch of Ser is a major site of phosphorylation. Only the phosphorylated forms are capable of interacting with beta or gamma genes.

The protein localises to the host nucleus. The protein resides in the host cytoplasm. It localises to the virion tegument. Plays an essential role in the regulation of viral gene expression by both activating and repressing host RNA polymerase II-mediated transcription. Binds with high affinity to the sequence 5'-ATCGTC-3'. Activates transcription by recruiting a form of the host TFIID to promoters and stabilizing the pre-initiation complex formation. Negatively regulates its own transcription. This immediate early (IE) protein is absolutely necessary for the transition from IE transcription to later viral gene transcription. In addition, binds to the host promoters of CXCR3 ligands including CXCL9, CXCL10, and CXCL11 and interacts with TBP to activate their transcription. In turn, mediates CD4+ T-cell migration. This is Major viral transcription factor ICP4 homolog (ICP4) from Human herpesvirus 2 (strain HG52) (HHV-2).